The sequence spans 948 residues: UvrABC system protein A (948 aa).

Residue 33–40 participates in ATP binding; it reads GLSGSGKS. The segment at 252–279 adopts a C4-type zinc-finger fold; sequence CPICGFSIGELEPRMFSFNSPFGACPTC. 2 ABC transporter domains span residues 309-587 and 607-935; these read WIPT…KKSL and ASDR…KYLK. 639–646 is an ATP binding site; the sequence is GVSGSGKS. The C4-type zinc finger occupies 738 to 764; sequence CEACKGDGIIKIEMHFLPDVYVPCEVC.

It belongs to the ABC transporter superfamily. UvrA family. Forms a heterotetramer with UvrB during the search for lesions.

The protein localises to the cytoplasm. Functionally, the UvrABC repair system catalyzes the recognition and processing of DNA lesions. UvrA is an ATPase and a DNA-binding protein. A damage recognition complex composed of 2 UvrA and 2 UvrB subunits scans DNA for abnormalities. When the presence of a lesion has been verified by UvrB, the UvrA molecules dissociate. The chain is UvrABC system protein A from Staphylococcus aureus (strain N315).